A 352-amino-acid chain; its full sequence is Molybdenum import ATP-binding protein ModC (352 aa).

An ABC transporter domain is found at 1-229 (MLELNFSQTL…SVMHPWLPKE (229 aa)). ATP is bound at residue 31 to 38 (GVSGAGKT). Residues 289–352 (QTSIRNVLRA…AQVKSVSITA (64 aa)) enclose the Mop domain.

It belongs to the ABC transporter superfamily. Molybdate importer (TC 3.A.1.8) family. The complex is composed of two ATP-binding proteins (ModC), two transmembrane proteins (ModB) and a solute-binding protein (ModA).

It is found in the cell inner membrane. The enzyme catalyses molybdate(out) + ATP + H2O = molybdate(in) + ADP + phosphate + H(+). Part of the ABC transporter complex ModABC involved in molybdenum import. Responsible for energy coupling to the transport system. This Salmonella paratyphi A (strain ATCC 9150 / SARB42) protein is Molybdenum import ATP-binding protein ModC.